A 232-amino-acid polypeptide reads, in one-letter code: 2,3,4,5-tetrahydropyridine-2,6-dicarboxylate N-acetyltransferase (232 aa).

It belongs to the transferase hexapeptide repeat family. DapH subfamily.

It catalyses the reaction (S)-2,3,4,5-tetrahydrodipicolinate + acetyl-CoA + H2O = L-2-acetamido-6-oxoheptanedioate + CoA. It participates in amino-acid biosynthesis; L-lysine biosynthesis via DAP pathway; LL-2,6-diaminopimelate from (S)-tetrahydrodipicolinate (acetylase route): step 1/3. Catalyzes the transfer of an acetyl group from acetyl-CoA to tetrahydrodipicolinate. The sequence is that of 2,3,4,5-tetrahydropyridine-2,6-dicarboxylate N-acetyltransferase from Kosmotoga olearia (strain ATCC BAA-1733 / DSM 21960 / TBF 19.5.1).